We begin with the raw amino-acid sequence, 252 residues long: Triosephosphate isomerase (252 aa).

10-12 lines the substrate pocket; sequence NWK. His-96 functions as the Electrophile in the catalytic mechanism. Catalysis depends on Glu-168, which acts as the Proton acceptor. Residues Gly-174, Ser-214, and 235–236 each bind substrate; that span reads GG.

The protein belongs to the triosephosphate isomerase family. As to quaternary structure, homodimer.

The protein resides in the cytoplasm. It carries out the reaction D-glyceraldehyde 3-phosphate = dihydroxyacetone phosphate. It functions in the pathway carbohydrate biosynthesis; gluconeogenesis. It participates in carbohydrate degradation; glycolysis; D-glyceraldehyde 3-phosphate from glycerone phosphate: step 1/1. Its function is as follows. Involved in the gluconeogenesis. Catalyzes stereospecifically the conversion of dihydroxyacetone phosphate (DHAP) to D-glyceraldehyde-3-phosphate (G3P). The polypeptide is Triosephosphate isomerase (Streptococcus pneumoniae serotype 2 (strain D39 / NCTC 7466)).